We begin with the raw amino-acid sequence, 300 residues long: Geranylgeranyl pyrophosphate synthase (300 aa).

Met1 bears the N-acetylmethionine mark. Residues Lys25, Arg28, and His57 each contribute to the isopentenyl diphosphate site. Residues Asp64 and Asp68 each contribute to the Mg(2+) site. Residue Arg73 coordinates dimethylallyl diphosphate. Arg74 provides a ligand contact to isopentenyl diphosphate. Residues Lys151, Thr152, Gln185, Lys202, and Lys212 each contribute to the dimethylallyl diphosphate site.

This sequence belongs to the FPP/GGPP synthase family. In terms of assembly, homohexamer; trimer of homodimers. Mg(2+) is required as a cofactor. As to expression, abundantly expressed in testis. Found in other tissues to a lower extent. Expressed in dermal fibroblast and skeletal muscle.

Its subcellular location is the cytoplasm. It is found in the perinuclear region. The protein localises to the myofibril. It localises to the sarcomere. The protein resides in the z line. The enzyme catalyses isopentenyl diphosphate + dimethylallyl diphosphate = (2E)-geranyl diphosphate + diphosphate. The catalysed reaction is isopentenyl diphosphate + (2E)-geranyl diphosphate = (2E,6E)-farnesyl diphosphate + diphosphate. It catalyses the reaction isopentenyl diphosphate + (2E,6E)-farnesyl diphosphate = (2E,6E,10E)-geranylgeranyl diphosphate + diphosphate. Its pathway is isoprenoid biosynthesis; farnesyl diphosphate biosynthesis; farnesyl diphosphate from geranyl diphosphate and isopentenyl diphosphate: step 1/1. It participates in isoprenoid biosynthesis; geranyl diphosphate biosynthesis; geranyl diphosphate from dimethylallyl diphosphate and isopentenyl diphosphate: step 1/1. The protein operates within isoprenoid biosynthesis; geranylgeranyl diphosphate biosynthesis; geranylgeranyl diphosphate from farnesyl diphosphate and isopentenyl diphosphate: step 1/1. Its activity is regulated as follows. Subject to product inhibition by geranylgeranyl diphosphate. In terms of biological role, catalyzes the trans-addition of the three molecules of IPP onto DMAPP to form geranylgeranyl pyrophosphate, an important precursor of carotenoids and geranylated proteins. The polypeptide is Geranylgeranyl pyrophosphate synthase (GGPS1) (Homo sapiens (Human)).